The sequence spans 365 residues: tRNA(Met) cytidine acetate ligase (365 aa).

Residues 7 to 20 (IAEF…HKYL), Gly-96, Asn-152, and Arg-175 contribute to the ATP site.

It belongs to the TmcAL family.

The protein resides in the cytoplasm. The enzyme catalyses cytidine(34) in elongator tRNA(Met) + acetate + ATP = N(4)-acetylcytidine(34) in elongator tRNA(Met) + AMP + diphosphate. Its function is as follows. Catalyzes the formation of N(4)-acetylcytidine (ac(4)C) at the wobble position of elongator tRNA(Met), using acetate and ATP as substrates. First activates an acetate ion to form acetyladenylate (Ac-AMP) and then transfers the acetyl group to tRNA to form ac(4)C34. The sequence is that of tRNA(Met) cytidine acetate ligase from Streptococcus pneumoniae (strain ATCC 700669 / Spain 23F-1).